The primary structure comprises 291 residues: Bifunctional protein FolD (291 aa).

NADP(+) contacts are provided by residues 167-169 (GRS) and S192.

It belongs to the tetrahydrofolate dehydrogenase/cyclohydrolase family. Homodimer.

It carries out the reaction (6R)-5,10-methylene-5,6,7,8-tetrahydrofolate + NADP(+) = (6R)-5,10-methenyltetrahydrofolate + NADPH. The enzyme catalyses (6R)-5,10-methenyltetrahydrofolate + H2O = (6R)-10-formyltetrahydrofolate + H(+). It participates in one-carbon metabolism; tetrahydrofolate interconversion. In terms of biological role, catalyzes the oxidation of 5,10-methylenetetrahydrofolate to 5,10-methenyltetrahydrofolate and then the hydrolysis of 5,10-methenyltetrahydrofolate to 10-formyltetrahydrofolate. This is Bifunctional protein FolD from Leptospira biflexa serovar Patoc (strain Patoc 1 / Ames).